Here is a 121-residue protein sequence, read N- to C-terminus: Dihydroneopterin aldolase (121 aa).

Substrate contacts are provided by residues Glu22, Tyr54, and Leu73 to Glu74. Residue Lys100 is the Proton donor/acceptor of the active site.

Belongs to the DHNA family. Homooctamer. Four molecules assemble into a ring, and two rings come together to give a cylinder with a hole of at least 13 a diameter.

The enzyme catalyses 7,8-dihydroneopterin = 6-hydroxymethyl-7,8-dihydropterin + glycolaldehyde. It catalyses the reaction 7,8-dihydroneopterin = 7,8-dihydromonapterin. Its pathway is cofactor biosynthesis; tetrahydrofolate biosynthesis; 2-amino-4-hydroxy-6-hydroxymethyl-7,8-dihydropteridine diphosphate from 7,8-dihydroneopterin triphosphate: step 3/4. Its function is as follows. Catalyzes the conversion of 7,8-dihydroneopterin to 6-hydroxymethyl-7,8-dihydropterin. Can also catalyze the epimerization of carbon 2' of dihydroneopterin to dihydromonapterin. The sequence is that of Dihydroneopterin aldolase (folB) from Staphylococcus aureus (strain COL).